The sequence spans 259 residues: Troponin T, fast skeletal muscle (259 aa).

A compositionally biased stretch (acidic residues) spans 1-36 (MSDEETEQVEEQYEEEEEAQEEEVQEEAPEPEEVQE). Residues 1–62 (MSDEETEQVE…EKVDFDDIQK (62 aa)) form a disordered region. S2 carries the post-translational modification N-acetylserine. S2 is modified (phosphoserine). Positions 50–62 (PEGEKVDFDDIQK) are enriched in basic and acidic residues. S78 is modified (phosphoserine). A compositionally biased stretch (basic and acidic residues) spans 101–143 (RAERAEQQRIRAEKERERQNRLAEEKARREEEDAKRRAEDDLK). A disordered region spans residues 101–180 (RAERAEQQRI…TAREMKKKIL (80 aa)). 3 positions are modified to phosphoserine: S149, S156, and S157. Residues 171–180 (TAREMKKKIL) show a composition bias toward basic and acidic residues. S193 carries the post-translational modification Phosphoserine. The residue at position 209 (Y209) is a Phosphotyrosine. The disordered stretch occupies residues 235-259 (RIDQAQKHSKKAGATAKGKVGGRWK).

It belongs to the troponin T family.

Functionally, troponin T is the tropomyosin-binding subunit of troponin, the thin filament regulatory complex which confers calcium-sensitivity to striated muscle actomyosin ATPase activity. This chain is Troponin T, fast skeletal muscle (Tnnt3), found in Rattus norvegicus (Rat).